A 267-amino-acid polypeptide reads, in one-letter code: Small ribosomal subunit protein uS2 (267 aa).

A disordered region spans residues 224–244 (GRQGEDEDVTEDSFKDNKDAK). Positions 235–244 (DSFKDNKDAK) are enriched in basic and acidic residues.

Belongs to the universal ribosomal protein uS2 family.

The polypeptide is Small ribosomal subunit protein uS2 (Lactiplantibacillus plantarum (strain ATCC BAA-793 / NCIMB 8826 / WCFS1) (Lactobacillus plantarum)).